We begin with the raw amino-acid sequence, 234 residues long: Carboxy-S-adenosyl-L-methionine synthase (234 aa).

S-adenosyl-L-methionine is bound by residues Y35, 60-62, 83-84, 109-110, N124, and R191; these read GCS, DN, and DI.

It belongs to the class I-like SAM-binding methyltransferase superfamily. Cx-SAM synthase family. As to quaternary structure, homodimer.

The enzyme catalyses prephenate + S-adenosyl-L-methionine = carboxy-S-adenosyl-L-methionine + 3-phenylpyruvate + H2O. Catalyzes the conversion of S-adenosyl-L-methionine (SAM) to carboxy-S-adenosyl-L-methionine (Cx-SAM). The polypeptide is Carboxy-S-adenosyl-L-methionine synthase (Campylobacter hominis (strain ATCC BAA-381 / DSM 21671 / CCUG 45161 / LMG 19568 / NCTC 13146 / CH001A)).